The sequence spans 468 residues: MFRQEQPLAEGSFAPMGSLQPDAGNASWNGTEAPGGGARATPYSLQVTLTLVCLAGLLMLFTVFGNVLVIIAVFTSRALKAPQNLFLVSLASADILVATLVIPFSLANEVMGYWYFGKAWCEIYLALDVLFCTSSIVHLCAISLDRYWSITQAIEYNLKRTPRRIKAIIVTVWVISAVISFPPLISFEKKRGRSGQPSAEPRCEINDQKWYVISSSIGSFFAPCLIMILVYVRIYQIAKRRTRVPPSRRGPDATAAELPGSAERRPNGLGPERGGVGPVGAEVESLQVQLNGAPGEPAPAGPPDADALDLEESSSSEHAERPPGSRRSERGPRAKGKARASQVKPGDSLPRRGPGATGLGAPTAGPAEERSGGGAKASRWRGRQNREKRFTFVLAVVIGVFVVCWFPFFFTYTLTAIGCPVPPTLFKFFFWFGYCNSSLNPVIYTIFNHDFRRAFKKILCRGDRKRIV.

Topologically, residues 1-48 are extracellular; that stretch reads MFRQEQPLAEGSFAPMGSLQPDAGNASWNGTEAPGGGARATPYSLQVT. 2 N-linked (GlcNAc...) asparagine glycosylation sites follow: Asn-25 and Asn-29. Residues 49–74 form a helical membrane-spanning segment; sequence LTLVCLAGLLMLFTVFGNVLVIIAVF. The Cytoplasmic portion of the chain corresponds to 75–85; the sequence is TSRALKAPQNL. The helical transmembrane segment at 86–111 threads the bilayer; the sequence is FLVSLASADILVATLVIPFSLANEVM. At 112-121 the chain is on the extracellular side; it reads GYWYFGKAWC. A disulfide bond links Cys-121 and Cys-203. The helical transmembrane segment at 122-144 threads the bilayer; it reads EIYLALDVLFCTSSIVHLCAISL. The Cytoplasmic portion of the chain corresponds to 145–164; sequence DRYWSITQAIEYNLKRTPRR. A helical transmembrane segment spans residues 165 to 188; the sequence is IKAIIVTVWVISAVISFPPLISFE. Residues 189 to 207 are Extracellular-facing; that stretch reads KKRGRSGQPSAEPRCEIND. The helical transmembrane segment at 208 to 232 threads the bilayer; that stretch reads QKWYVISSSIGSFFAPCLIMILVYV. The Cytoplasmic portion of the chain corresponds to 233–392; sequence RIYQIAKRRT…RQNREKRFTF (160 aa). Disordered stretches follow at residues 242–279 and 291–381; these read TRVP…VGPV and NGAP…SRWR. A compositionally biased stretch (basic and acidic residues) spans 315 to 332; that stretch reads SSEHAERPPGSRRSERGP. The residue at position 348 (Ser-348) is a Phosphoserine. Residues 351–366 show a composition bias toward low complexity; the sequence is RRGPGATGLGAPTAGP. Arg-370 bears the Omega-N-methylarginine mark. A helical membrane pass occupies residues 393 to 417; the sequence is VLAVVIGVFVVCWFPFFFTYTLTAI. At 418-427 the chain is on the extracellular side; the sequence is GCPVPPTLFK. Residues 428 to 448 traverse the membrane as a helical segment; that stretch reads FFFWFGYCNSSLNPVIYTIFN. Residues 449–468 are Cytoplasmic-facing; the sequence is HDFRRAFKKILCRGDRKRIV. Cys-460 carries S-palmitoyl cysteine lipidation.

The protein belongs to the G-protein coupled receptor 1 family. Adrenergic receptor subfamily. ADRA2A sub-subfamily. As to quaternary structure, component of the ADA2A-containing complex (ATAC), composed of KAT14, KAT2A, TADA2L, TADA3L, ZZ3, MBIP, WDR5, YEATS2, CCDC101 and DR1. Retina, brain and olfactory lobe.

It localises to the cell membrane. In terms of biological role, alpha-2 adrenergic receptors mediate the catecholamine-induced inhibition of adenylate cyclase through the action of G proteins. Component of the ATAC complex, a complex with histone acetyltransferase activity on histones H3 and H4. This chain is Alpha-2A adrenergic receptor, found in Bos taurus (Bovine).